The sequence spans 162 residues: Phosphopantetheine adenylyltransferase (162 aa).

Threonine 10 is a binding site for substrate. Residues 10–11 (TF) and histidine 18 contribute to the ATP site. Substrate contacts are provided by lysine 42, methionine 74, and arginine 88. ATP is bound by residues 89 to 91 (GLR), glutamate 99, and 124 to 130 (YAFLSST).

The protein belongs to the bacterial CoaD family. As to quaternary structure, homohexamer. The cofactor is Mg(2+).

The protein localises to the cytoplasm. It catalyses the reaction (R)-4'-phosphopantetheine + ATP + H(+) = 3'-dephospho-CoA + diphosphate. Its pathway is cofactor biosynthesis; coenzyme A biosynthesis; CoA from (R)-pantothenate: step 4/5. Reversibly transfers an adenylyl group from ATP to 4'-phosphopantetheine, yielding dephospho-CoA (dPCoA) and pyrophosphate. The protein is Phosphopantetheine adenylyltransferase of Aliivibrio salmonicida (strain LFI1238) (Vibrio salmonicida (strain LFI1238)).